Consider the following 206-residue polypeptide: Ribonuclease HII (206 aa).

One can recognise an RNase H type-2 domain in the interval 18 to 206 (GRVAGVDEVG…PVREWLEANS (189 aa)). Positions 24, 25, and 116 each coordinate a divalent metal cation.

This sequence belongs to the RNase HII family. The cofactor is Mn(2+). Requires Mg(2+) as cofactor.

It is found in the cytoplasm. The catalysed reaction is Endonucleolytic cleavage to 5'-phosphomonoester.. Endonuclease that specifically degrades the RNA of RNA-DNA hybrids. The polypeptide is Ribonuclease HII (Shewanella amazonensis (strain ATCC BAA-1098 / SB2B)).